The sequence spans 63 residues: Potassium channel toxin Sp4 (63 aa).

Residues 1-20 form the signal peptide; that stretch reads MNKVHFALFLLVLTVLAVSG. Intrachain disulfides connect C31–C53, C38–C58, and C42–C60.

It belongs to the long chain scorpion toxin family. Class 2 subfamily. In terms of tissue distribution, expressed by the venom gland.

It is found in the secreted. Functionally, this recombinant toxin selectively inhibits mouse voltage-gated potassium channel Kv1.3/KCNA3 (IC(50)=24.73 nM). The protein is Potassium channel toxin Sp4 of Scorpiops pococki (Scorpion).